The following is a 153-amino-acid chain: Endoribonuclease YbeY (153 aa).

3 residues coordinate Zn(2+): His114, His118, and His124.

This sequence belongs to the endoribonuclease YbeY family. Zn(2+) is required as a cofactor.

It localises to the cytoplasm. Its function is as follows. Single strand-specific metallo-endoribonuclease involved in late-stage 70S ribosome quality control and in maturation of the 3' terminus of the 16S rRNA. This Shewanella amazonensis (strain ATCC BAA-1098 / SB2B) protein is Endoribonuclease YbeY.